The primary structure comprises 213 residues: Pyridoxine/pyridoxamine 5'-phosphate oxidase (213 aa).

FMN-binding positions include Arg-60–Lys-65, Tyr-75–Ser-76, Lys-82, and Gln-104. Lys-65 lines the substrate pocket. 2 residues coordinate substrate: Tyr-122 and Arg-126. Residues Gln-139–Ser-140 and Trp-184 each bind FMN. Arg-190–His-192 serves as a coordination point for substrate. Arg-194 provides a ligand contact to FMN.

It belongs to the pyridoxamine 5'-phosphate oxidase family. In terms of assembly, homodimer. FMN serves as cofactor.

It carries out the reaction pyridoxamine 5'-phosphate + O2 + H2O = pyridoxal 5'-phosphate + H2O2 + NH4(+). The enzyme catalyses pyridoxine 5'-phosphate + O2 = pyridoxal 5'-phosphate + H2O2. Its pathway is cofactor metabolism; pyridoxal 5'-phosphate salvage; pyridoxal 5'-phosphate from pyridoxamine 5'-phosphate: step 1/1. The protein operates within cofactor metabolism; pyridoxal 5'-phosphate salvage; pyridoxal 5'-phosphate from pyridoxine 5'-phosphate: step 1/1. Functionally, catalyzes the oxidation of either pyridoxine 5'-phosphate (PNP) or pyridoxamine 5'-phosphate (PMP) into pyridoxal 5'-phosphate (PLP). This is Pyridoxine/pyridoxamine 5'-phosphate oxidase from Bradyrhizobium diazoefficiens (strain JCM 10833 / BCRC 13528 / IAM 13628 / NBRC 14792 / USDA 110).